The primary structure comprises 194 residues: uncharacterized protein (194 aa).

Positions 1-22 (MNKVTKTAIAGLLALFAGNAAA) are cleaved as a signal peptide. Cysteine 38 and cysteine 78 are oxidised to a cystine.

This sequence belongs to the fimbrial protein family.

The protein localises to the fimbrium. In terms of biological role, part of the yraHIJK fimbrial operon. Could contribute to adhesion to various surfaces in specific environmental niches. Increases adhesion to eukaryotic T24 bladder epithelial cells in the absence of fim operon. This is an uncharacterized protein from Escherichia coli (strain K12).